We begin with the raw amino-acid sequence, 119 residues long: Large ribosomal subunit protein bL19 (119 aa).

Belongs to the bacterial ribosomal protein bL19 family.

In terms of biological role, this protein is located at the 30S-50S ribosomal subunit interface and may play a role in the structure and function of the aminoacyl-tRNA binding site. This chain is Large ribosomal subunit protein bL19, found in Leuconostoc citreum (strain KM20).